The chain runs to 394 residues: Aspergillopepsin-1 (394 aa).

A signal peptide spans 1-20; that stretch reads MVVFSKTAALVLGLSTAVSA. A propeptide spans 21-69 (activation peptide); that stretch reads APAPTRKGFTINQIARPANKTRTVNLPGLYARSLAKFGGTVPQSVKEAA. One can recognise a Peptidase A1 domain in the interval 85–391; that stretch reads YLTPVTVGKS…NSEGPKLGFA (307 aa). Active-site residues include D101 and D283. C319 and C354 are joined by a disulfide.

This sequence belongs to the peptidase A1 family.

It localises to the secreted. The catalysed reaction is Hydrolysis of proteins with broad specificity. Generally favors hydrophobic residues in P1 and P1', but also accepts Lys in P1, which leads to activation of trypsinogen. Does not clot milk.. Functionally, secreted aspartic endopeptidase that allows assimilation of proteinaceous substrates. The scissile peptide bond is attacked by a nucleophilic water molecule activated by two aspartic residues in the active site. Shows a broad primary substrate specificity. Favors hydrophobic residues at the P1 and P1' positions, but also accepts a lysine residue in the P1 position, leading to the activation of trypsinogen and chymotrypsinogen A. The protein is Aspergillopepsin-1 of Aspergillus niger.